The sequence spans 434 residues: Trigger factor (434 aa).

The PPIase FKBP-type domain maps to 160-245 (DDKVKMNFIG…LTEVQAANLP (86 aa)).

Belongs to the FKBP-type PPIase family. Tig subfamily.

It localises to the cytoplasm. The enzyme catalyses [protein]-peptidylproline (omega=180) = [protein]-peptidylproline (omega=0). Functionally, involved in protein export. Acts as a chaperone by maintaining the newly synthesized protein in an open conformation. Functions as a peptidyl-prolyl cis-trans isomerase. The protein is Trigger factor of Shewanella frigidimarina (strain NCIMB 400).